The following is a 103-amino-acid chain: Large ribosomal subunit protein uL24 (103 aa).

It belongs to the universal ribosomal protein uL24 family. As to quaternary structure, part of the 50S ribosomal subunit.

Functionally, one of two assembly initiator proteins, it binds directly to the 5'-end of the 23S rRNA, where it nucleates assembly of the 50S subunit. Its function is as follows. One of the proteins that surrounds the polypeptide exit tunnel on the outside of the subunit. The sequence is that of Large ribosomal subunit protein uL24 from Halalkalibacterium halodurans (strain ATCC BAA-125 / DSM 18197 / FERM 7344 / JCM 9153 / C-125) (Bacillus halodurans).